The following is a 301-amino-acid chain: uncharacterized protein (301 aa).

It belongs to the asfivirus E301R family. Interacts with host IRF3.

In terms of biological role, plays a role in the inhibition of host innate immune system by acting as a negatively regulator of type I interferon production. Mechanistically, interacts with and prevents host IRF3 nuclear localization to inhibit its transcriptional activity. This is an uncharacterized protein from African swine fever virus (isolate Pig/Kenya/KEN-50/1950) (ASFV).